The sequence spans 128 residues: Small ribosomal subunit protein uS10 (128 aa).

Belongs to the universal ribosomal protein uS10 family.

The chain is Small ribosomal subunit protein uS10 (RPS20) from Oryza sativa subsp. japonica (Rice).